Here is a 307-residue protein sequence, read N- to C-terminus: Pseudouridine-5'-phosphate glycosidase (307 aa).

The active-site Proton donor is Glu-26. Positions 88 and 108 each coordinate substrate. Asp-140 contributes to the Mn(2+) binding site. 142 to 144 (SAD) lines the substrate pocket. Lys-161 (nucleophile) is an active-site residue.

The protein belongs to the pseudouridine-5'-phosphate glycosidase family. As to quaternary structure, homotrimer. The cofactor is Mn(2+).

The catalysed reaction is D-ribose 5-phosphate + uracil = psi-UMP + H2O. Catalyzes the reversible cleavage of pseudouridine 5'-phosphate (PsiMP) to ribose 5-phosphate and uracil. Functions biologically in the cleavage direction, as part of a pseudouridine degradation pathway. This is Pseudouridine-5'-phosphate glycosidase from Clostridium botulinum (strain Langeland / NCTC 10281 / Type F).